Here is a 382-residue protein sequence, read N- to C-terminus: Putative glutamate--cysteine ligase 2-1 (382 aa).

This sequence belongs to the glutamate--cysteine ligase type 2 family. YbdK subfamily.

It carries out the reaction L-cysteine + L-glutamate + ATP = gamma-L-glutamyl-L-cysteine + ADP + phosphate + H(+). In terms of biological role, ATP-dependent carboxylate-amine ligase which exhibits weak glutamate--cysteine ligase activity. The polypeptide is Putative glutamate--cysteine ligase 2-1 (Frankia casuarinae (strain DSM 45818 / CECT 9043 / HFP020203 / CcI3)).